Here is a 159-residue protein sequence, read N- to C-terminus: Phosphopantetheine adenylyltransferase (159 aa).

Substrate is bound at residue Thr-10. ATP is bound by residues 10-11 (TF) and His-18. Substrate is bound by residues Lys-42, Met-74, and Arg-88. Residues 89–91 (GLR), Glu-99, and 124–130 (WSFISSS) each bind ATP.

Belongs to the bacterial CoaD family. As to quaternary structure, homohexamer. The cofactor is Mg(2+).

It is found in the cytoplasm. It catalyses the reaction (R)-4'-phosphopantetheine + ATP + H(+) = 3'-dephospho-CoA + diphosphate. Its pathway is cofactor biosynthesis; coenzyme A biosynthesis; CoA from (R)-pantothenate: step 4/5. Its function is as follows. Reversibly transfers an adenylyl group from ATP to 4'-phosphopantetheine, yielding dephospho-CoA (dPCoA) and pyrophosphate. This chain is Phosphopantetheine adenylyltransferase, found in Salmonella paratyphi A (strain ATCC 9150 / SARB42).